A 454-amino-acid polypeptide reads, in one-letter code: Adenylosuccinate synthetase isozyme 1 B (454 aa).

A disordered region spans residues methionine 1–tyrosine 24. GTP contacts are provided by residues glycine 39–lysine 45 and glycine 67–threonine 69. Aspartate 40 functions as the Proton acceptor in the catalytic mechanism. 2 residues coordinate Mg(2+): aspartate 40 and glycine 67. Residue aspartate 40 participates in substrate binding. Residues aspartate 40–lysine 43, asparagine 65–histidine 68, threonine 160, arginine 174, asparagine 253, threonine 268, and arginine 332 contribute to the IMP site. Histidine 68 (proton donor) is an active-site residue. Substrate is bound at residue valine 328–arginine 334. GTP-binding positions include arginine 334, lysine 360–aspartate 362, and glycine 442–lysine 445.

Belongs to the adenylosuccinate synthetase family. As to quaternary structure, homodimer. Mg(2+) serves as cofactor.

The protein resides in the cytoplasm. It catalyses the reaction IMP + L-aspartate + GTP = N(6)-(1,2-dicarboxyethyl)-AMP + GDP + phosphate + 2 H(+). Its pathway is purine metabolism; AMP biosynthesis via de novo pathway; AMP from IMP: step 1/2. Functionally, component of the purine nucleotide cycle (PNC), which interconverts IMP and AMP to regulate the nucleotide levels in various tissues, and which contributes to glycolysis and ammoniagenesis. Catalyzes the first committed step in the biosynthesis of AMP from IMP. This is Adenylosuccinate synthetase isozyme 1 B (adss1-b) from Xenopus laevis (African clawed frog).